The chain runs to 200 residues: Large ribosomal subunit protein uL4 (200 aa).

Residues 43–71 (RAQKTRAEVSGSGKKPWRQKGTGRARSGD) form a disordered region.

Belongs to the universal ribosomal protein uL4 family. As to quaternary structure, part of the 50S ribosomal subunit.

Functionally, one of the primary rRNA binding proteins, this protein initially binds near the 5'-end of the 23S rRNA. It is important during the early stages of 50S assembly. It makes multiple contacts with different domains of the 23S rRNA in the assembled 50S subunit and ribosome. Its function is as follows. Forms part of the polypeptide exit tunnel. The polypeptide is Large ribosomal subunit protein uL4 (Aggregatibacter actinomycetemcomitans (Actinobacillus actinomycetemcomitans)).